Reading from the N-terminus, the 2224-residue chain is Myomegalin (2224 aa).

4 coiled-coil regions span residues 41 to 97 (REDV…RQQE), 162 to 205 (DQYS…LLEE), 236 to 318 (VSES…REML), and 350 to 682 (CSQL…ALRQ). Residues 206–236 (PASMEVQPVPKGLPTQQKPDLHETPTTQPPV) are disordered. The span at 219-236 (PTQQKPDLHETPTTQPPV) shows a compositional bias: polar residues. The tract at residues 703–751 (GVTSIGPHHGEQTDQGSMQMPSRDDSTSLTAREEASIPRSTLGDSDTVA) is disordered. Thr-705 is modified (phosphothreonine). Over residues 724-738 (SRDDSTSLTAREEAS) the composition is skewed to basic and acidic residues. Coiled-coil stretches lie at residues 745 to 822 (GDSD…QLVD), 856 to 886 (NKRQQLLLMLEGLVDERSRLNEALQAERQLY), and 949 to 986 (AQEMLHLRAEIHQHLEEKRKAEVELKELKAQIEEAGFS). Disordered regions lie at residues 1098-1128 (TGLPSLGKHQHQEQENTTTARPGSRPQSLPL), 1141-1161 (NKSQAQDSGHQPEFSLPGSTK), and 1270-1298 (VSPPAKKPLENKPGKQEEFRAHGTPDDSS). Positions 1112 to 1124 (ENTTTARPGSRPQ) are enriched in polar residues. Coiled coils occupy residues 1159–1187 (STKHLRSQLAQCRQRYQDLQEKLLISEAT), 1295–1331 (DDSSLLRKDIRDLKAQLQNANKVIQNLRSRVRSLSAT), and 1377–1401 (GLQAKKDLESLIQRVSQLEAQLPKT). Residues 1276–1298 (KPLENKPGKQEEFRAHGTPDDSS) show a composition bias toward basic and acidic residues. One can recognise an Olduvai domain in the interval 1497–1588 (KDHKSEKEEA…DEKKPSPSHS (92 aa)). 4 disordered regions span residues 1576–1637 (THYD…SLSQ), 1736–1757 (SSGQWDMMRPQKGSVSGELSSG), 1805–1824 (LSSTARENGSTSHFYSQGLE), and 1962–2001 (KASLGPIAVGQSFPDKAEPANLHQGSAASPPVRDVGLNSP). Residues 1599–1609 (ESSSSPISLPT) are compositionally biased toward polar residues. The segment covering 1748-1757 (GSVSGELSSG) has biased composition (low complexity). Positions 1769–1958 (GADLLEEHLG…RLQLEQQMDR (190 aa)) form a coiled coil. Residues 2148–2191 (KEGQLMEKELLDLRAQVSQQEQILQNTAARLKRANQRKKSMEQF) are a coiled coil.

Interacts with PDE4D. Isoform 2 interacts with MAPRE1 and MAPRE3. Isoform 2 forms a pericentrosomal complex with AKAP9, CDK5RAP2 and EB1/MAPRE1; within this complex, may mediate MAPRE1-binding to CDK5RAP2. Interaction with AKAP9 stabilizes both proteins. Isoform 2 interacts (via N-terminus) with CAMSAP2; this interaction is much stronger in the presence of AKAP9. In complex with AKAP9, Isoform 2 recruits CAMSAP2 to the Golgi apparatus. Isoform 2 interacts with unglycosylated LGALS3BP; this interaction may connect the pericentrosomal complex to the gamma-tubulin ring complex (gamma-TuRC) to promote microtubule assembly and acetylation.

The protein resides in the cytoplasm. It localises to the cytoskeleton. The protein localises to the microtubule organizing center. Its subcellular location is the centrosome. It is found in the golgi apparatus. Functionally, functions as an anchor sequestering components of the cAMP-dependent pathway to Golgi and/or centrosomes. Participates in microtubule dynamics, promoting microtubule assembly. Depending upon the cell context, may act at the level of the Golgi apparatus or that of the centrosome. In complex with AKAP9, recruits CAMSAP2 to the Golgi apparatus and tethers non-centrosomal minus-end microtubules to the Golgi, an important step for polarized cell movement. In complex with AKAP9, EB1/MAPRE1 and CDK5RAP2, contributes to microtubules nucleation and extension from the centrosome to the cell periphery, a crucial process for directed cell migration, mitotic spindle orientation and cell-cycle progression. The polypeptide is Myomegalin (Pde4dip) (Mus musculus (Mouse)).